The primary structure comprises 705 residues: Polyribonucleotide nucleotidyltransferase (705 aa).

D487 and D493 together coordinate Mg(2+). Positions 554–613 (PKILTMSINPDKIRDVIGPSGKQINKIIEDTGVKIDIEQDGTIFISSTDESMNQKAKKII) constitute a KH domain. One can recognise an S1 motif domain in the interval 623–691 (GQLYLGKVKR…KQGRVNLSRK (69 aa)).

It belongs to the polyribonucleotide nucleotidyltransferase family. It depends on Mg(2+) as a cofactor.

Its subcellular location is the cytoplasm. It carries out the reaction RNA(n+1) + phosphate = RNA(n) + a ribonucleoside 5'-diphosphate. In terms of biological role, involved in mRNA degradation. Catalyzes the phosphorolysis of single-stranded polyribonucleotides processively in the 3'- to 5'-direction. The chain is Polyribonucleotide nucleotidyltransferase from Bacillus licheniformis (strain ATCC 14580 / DSM 13 / JCM 2505 / CCUG 7422 / NBRC 12200 / NCIMB 9375 / NCTC 10341 / NRRL NRS-1264 / Gibson 46).